A 231-amino-acid chain; its full sequence is 7-cyano-7-deazaguanine synthase (231 aa).

Position 8-18 (8-18 (FSGGQDSTTCL)) interacts with ATP. Zn(2+) is bound by residues cysteine 187, cysteine 196, cysteine 199, and cysteine 202.

It belongs to the QueC family. The cofactor is Zn(2+).

The catalysed reaction is 7-carboxy-7-deazaguanine + NH4(+) + ATP = 7-cyano-7-deazaguanine + ADP + phosphate + H2O + H(+). It functions in the pathway purine metabolism; 7-cyano-7-deazaguanine biosynthesis. In terms of biological role, catalyzes the ATP-dependent conversion of 7-carboxy-7-deazaguanine (CDG) to 7-cyano-7-deazaguanine (preQ(0)). This chain is 7-cyano-7-deazaguanine synthase, found in Vibrio cholerae serotype O1 (strain ATCC 39541 / Classical Ogawa 395 / O395).